We begin with the raw amino-acid sequence, 440 residues long: 3-phosphoshikimate 1-carboxyvinyltransferase (440 aa).

Residues Lys31, Ser32, and Arg36 each coordinate 3-phosphoshikimate. Residue Lys31 participates in phosphoenolpyruvate binding. Phosphoenolpyruvate-binding residues include Gly104 and Arg133. Ser178, Gln180, Asp328, and Lys355 together coordinate 3-phosphoshikimate. Gln180 is a binding site for phosphoenolpyruvate. The active-site Proton acceptor is the Asp328. Residues Arg359 and Arg401 each coordinate phosphoenolpyruvate.

Belongs to the EPSP synthase family. Monomer.

It is found in the cytoplasm. It carries out the reaction 3-phosphoshikimate + phosphoenolpyruvate = 5-O-(1-carboxyvinyl)-3-phosphoshikimate + phosphate. It participates in metabolic intermediate biosynthesis; chorismate biosynthesis; chorismate from D-erythrose 4-phosphate and phosphoenolpyruvate: step 6/7. Functionally, catalyzes the transfer of the enolpyruvyl moiety of phosphoenolpyruvate (PEP) to the 5-hydroxyl of shikimate-3-phosphate (S3P) to produce enolpyruvyl shikimate-3-phosphate and inorganic phosphate. The protein is 3-phosphoshikimate 1-carboxyvinyltransferase of Thermosynechococcus vestitus (strain NIES-2133 / IAM M-273 / BP-1).